The primary structure comprises 278 residues: Sulfur carrier protein FdhD (278 aa).

Cys113 functions as the Cysteine persulfide intermediate in the catalytic mechanism. A Mo-bis(molybdopterin guanine dinucleotide)-binding site is contributed by 251–256 (FCRNGR).

Belongs to the FdhD family.

It is found in the cytoplasm. In terms of biological role, required for formate dehydrogenase (FDH) activity. Acts as a sulfur carrier protein that transfers sulfur from IscS to the molybdenum cofactor prior to its insertion into FDH. The chain is Sulfur carrier protein FdhD from Shewanella oneidensis (strain ATCC 700550 / JCM 31522 / CIP 106686 / LMG 19005 / NCIMB 14063 / MR-1).